Reading from the N-terminus, the 275-residue chain is Elongation factor Ts (275 aa).

Positions 76 to 79 are involved in Mg(2+) ion dislocation from EF-Tu; it reads TDFV.

Belongs to the EF-Ts family.

It is found in the cytoplasm. Functionally, associates with the EF-Tu.GDP complex and induces the exchange of GDP to GTP. It remains bound to the aminoacyl-tRNA.EF-Tu.GTP complex up to the GTP hydrolysis stage on the ribosome. The sequence is that of Elongation factor Ts from Rhodococcus erythropolis (strain PR4 / NBRC 100887).